Reading from the N-terminus, the 311-residue chain is Malate dehydrogenase (311 aa).

Residues 7-13 (GAAGGIG) and Asp-34 contribute to the NAD(+) site. Positions 81 and 87 each coordinate substrate. Residues Asn-94 and 117-119 (ITN) contribute to the NAD(+) site. Substrate contacts are provided by Asn-119 and Arg-153. The Proton acceptor role is filled by His-177. Met-227 provides a ligand contact to NAD(+).

This sequence belongs to the LDH/MDH superfamily. MDH type 1 family. Homodimer.

It catalyses the reaction (S)-malate + NAD(+) = oxaloacetate + NADH + H(+). In terms of biological role, catalyzes the reversible oxidation of malate to oxaloacetate. The polypeptide is Malate dehydrogenase (Vibrio campbellii (strain ATCC BAA-1116)).